Consider the following 424-residue polypeptide: Spermatogenesis-associated protein 2-like protein (424 aa).

Disordered regions lie at residues 233–258 (EDEG…AELA) and 273–300 (TGGR…EEGL). The residue at position 327 (serine 327) is a Phosphoserine.

It belongs to the SPATA2 family.

The chain is Spermatogenesis-associated protein 2-like protein from Homo sapiens (Human).